Reading from the N-terminus, the 111-residue chain is N-alpha-acetyltransferase 38-B, NatC auxiliary subunit (111 aa).

The Sm domain maps to 28–106 (TARHKLESLL…IVSIQVELET (79 aa)).

The protein belongs to the snRNP Sm proteins family. Component of the N-terminal acetyltransferase C (NatC) complex, which is composed of naa35, naa38 and naa30.

The protein localises to the cytoplasm. Auxillary component of the N-terminal acetyltransferase C (NatC) complex which catalyzes acetylation of N-terminal methionine residues. The protein is N-alpha-acetyltransferase 38-B, NatC auxiliary subunit (naa38-b) of Xenopus laevis (African clawed frog).